The primary structure comprises 139 residues: Translation initiation factor 2 subunit beta (139 aa).

Belongs to the eIF-2-beta/eIF-5 family. As to quaternary structure, heterotrimer composed of an alpha, a beta and a gamma chain.

Its function is as follows. eIF-2 functions in the early steps of protein synthesis by forming a ternary complex with GTP and initiator tRNA. The protein is Translation initiation factor 2 subunit beta of Nanoarchaeum equitans (strain Kin4-M).